We begin with the raw amino-acid sequence, 166 residues long: Cytochrome c-550 2 (166 aa).

An N-terminal signal peptide occupies residues Met1–Ala32. Residues Cys71, Cys74, and His75 each contribute to the heme c site.

Belongs to the cytochrome c family. PsbV subfamily. Heme c serves as cofactor.

It is found in the cell inner membrane. Probable low-potential cytochrome c, might function in photosystem II (PSII). The protein is Cytochrome c-550 2 (psbV2) of Gloeobacter violaceus (strain ATCC 29082 / PCC 7421).